A 141-amino-acid chain; its full sequence is Large ribosomal subunit protein uL14 (141 aa).

This sequence belongs to the universal ribosomal protein uL14 family. Part of the 50S ribosomal subunit. Forms a cluster with proteins L3 and L24e, part of which may contact the 16S rRNA in 2 intersubunit bridges.

In terms of biological role, binds to 23S rRNA. Forms part of two intersubunit bridges in the 70S ribosome. The chain is Large ribosomal subunit protein uL14 from Thermofilum pendens (strain DSM 2475 / Hrk 5).